Reading from the N-terminus, the 165-residue chain is Thiol peroxidase (165 aa).

The Thioredoxin domain occupies 18–164 (RKVGDKAPNF…YEAAIEAAKK (147 aa)). The active-site Cysteine sulfenic acid (-SOH) intermediate is cysteine 60. Cysteine 60 and cysteine 94 are oxidised to a cystine.

This sequence belongs to the peroxiredoxin family. Tpx subfamily. Homodimer.

The enzyme catalyses a hydroperoxide + [thioredoxin]-dithiol = an alcohol + [thioredoxin]-disulfide + H2O. In terms of biological role, thiol-specific peroxidase that catalyzes the reduction of hydrogen peroxide and organic hydroperoxides to water and alcohols, respectively. Plays a role in cell protection against oxidative stress by detoxifying peroxides. The chain is Thiol peroxidase from Listeria innocua serovar 6a (strain ATCC BAA-680 / CLIP 11262).